Consider the following 1117-residue polypeptide: MQKINNINNNKQMLTRKEDLLTVLKQISALKYVSNLYEFLLATEKIVQTSELDTQFQEFLTTTIIASEQNLVENYKQKYNQPNFSQLTIKQVIDDSIILLGNKQNYVQQIGTTTIGFYVEYENINLSRQTLYSSNFRNLLNIFGEEDFKYFLIDFLVFTKVEQNGYLQVAGVCLNQYFSVQVKQKKWYKNNFNMNGKATSNNNQNNANLSNEKKQENQYIYPEIQRSQIFYCNHMGREPGVFKSSFFNYSEIKKGFQFKVIQEKLQGRQFINSDKIKPDHPQTIIKKTLLKEYQSKNFSCQEERDLFLEFTEKIVQNFHNINFNYLLKKFCKLPENYQSLKSQVKQIVQSENKANQQSCENLFNSLYDTEISYKQITNFLRQIIQNCVPNQLLGKKNFKVFLEKLYEFVQMKRFENQKVLDYICFMDVFDVEWFVDLKNQKFTQKRKYISDKRKILGDLIVFIINKIVIPVLRYNFYITEKHKEGSQIFYYRKPIWKLVSKLTIVKLEEENLEKVEEKLIPEDSFQKYPQGKLRIIPKKGSFRPIMTFLRKDKQKNIKLNLNQILMDSQLVFRNLKDMLGQKIGYSVFDNKQISEKFAQFIEKWKNKGRPQLYYVTLDIKKCYDSIDQMKLLNFFNQSDLIQDTYFINKYLLFQRNKRPLLQIQQTNNLNSAMEIEEEKINKKPFKMDNINFPYYFNLKERQIAYSLYDDDDQILQKGFKEIQSDDRPFIVINQDKPRCITKDIIHNHLKHISQYNVISFNKVKFRQKRGIPQGLNISGVLCSFYFGKLEEEYTQFLKNAEQVNGSINLLMRLTDDYLFISDSQQNALNLIVQLQNCANNNGFMFNDQKITTNFQFPQEDYNLEHFKISVQNECQWIGKSIDMNTLEIKSIQKQTQQEINQTINVAISIKNLKSQLKNKLRSLFLNQLIDYFNPNINSFEGLCRQLYHHSKATVMKFYPFMTKLFQIDLKKSKQYSVQYGKENTNENFLKDILYYTVEDVCKILCYLQFEDEINSNIKEIFKNLYSWIMWDIIVSYLKKKKQFKGYLNKLLQKIRKSRFFYLKEGCKSLQLILSQQKYQLNKKELEAIEFIDLNNLIQDIKTLIPKISAKSNQQNTN.

A TEN region spans residues 1–191; it reads MQKINNINNN…VKQKKWYKNN (191 aa). The RBD stretch occupies residues 217 to 519; sequence NQYIYPEIQR…ENLEKVEEKL (303 aa). Residues 517-881 enclose the Reverse transcriptase domain; the sequence is EKLIPEDSFQ…NECQWIGKSI (365 aa). The RT stretch occupies residues 520–887; sequence IPEDSFQKYP…GKSIDMNTLE (368 aa). Asp-618 is a binding site for Mg(2+). The segment at 638–742 is TRAP; the sequence is SDLIQDTYFI…NQDKPRCITK (105 aa). 2 residues coordinate Mg(2+): Asp-815 and Asp-816. The tract at residues 888–1117 is CTE; it reads IKSIQKQTQQ…SAKSNQQNTN (230 aa).

This sequence belongs to the reverse transcriptase family. Telomerase subfamily. Component of the telomerase holoenzyme complex, composed of the catalytic core (the catalytic subunit TERT, the telomerase RNA template component TER and TAP65/p65), which is associated with two heterotrimeric subcomplexes: (i) the replication protein A (RPA)-related subcomplex, composed of TEB1, RPA2/TEB2 and RPA3/TEB3 and (ii) the CST-like subcomplex, composed of TAP75/p75, TAP45/p45 and TAP19/p19. TEB1 and the CST-like subcomplex are tethered to the catalytic core by TAP50/p50.

The protein localises to the nucleus. It localises to the chromosome. Its subcellular location is the telomere. The catalysed reaction is DNA(n) + a 2'-deoxyribonucleoside 5'-triphosphate = DNA(n+1) + diphosphate. In terms of biological role, catalytic component of telomerase, an essential ribonucleoprotein enzyme that copies new telomeric repeats onto chromosome ends by repetitively synthesizing the short telomere-repeat sequence 5'-TTGGGG-3' using an RNA template component TER. TERT is a reverse transcriptase that adds simple sequence repeats to chromosome ends by copying a template sequence within the RNA component of the enzyme. The polypeptide is Telomerase reverse transcriptase (Tetrahymena thermophila (strain SB210)).